The following is a 512-amino-acid chain: Immunoglobulin delta heavy chain (512 aa).

2 Ig-like domains span residues 1–97 (RLQL…MYYC) and 135–227 (PDVF…KEIF). Positions 1–129 (RLQLQESGPG…GQGTTVHVSS (129 aa)) are variable (V) domain, involved in antigen recognition. Disulfide bonds link cysteine 22/cysteine 97 and cysteine 157/cysteine 213. Residues 130 to 512 (APTKAPDVFP…VSYVTDHGPM (383 aa)) form a constant (C) domain region. The interval 225–296 (EIFRWPESPK…TPECPSHTQP (72 aa)) is disordered. Residues 235–247 (AQASSVPTAQPQA) are compositionally biased toward polar residues. O-linked (GalNAc...) serine glycosylation occurs at serine 238. 4 O-linked (GalNAc...) threonine glycosylation sites follow: threonine 255, threonine 256, threonine 260, and threonine 261. A compositionally biased stretch (basic and acidic residues) spans 267–287 (GGEEKKKEKEKEEQEERETKT). Ig-like domains follow at residues 304 to 392 (PAVQ…RLMA) and 396 to 502 (PAAQ…RSLE). Cystine bridges form between cysteine 319/cysteine 378 and cysteine 423/cysteine 484. N-linked (GlcNAc...) asparagine glycans are attached at residues asparagine 354, asparagine 445, and asparagine 496.

As to quaternary structure, immunoglobulins are composed of two identical heavy chains and two identical light chains; disulfide-linked. An IgD molecule contains thus a delta heavy chain combined with either a kappa or a lambda light chains. Kappa light chains are found predominantly on the membrane IgD (mIgD) form and lambda on the secreted IgD (sIgD) form, this fact is poorly understood. Membrane-bound IgD molecules are non-covalently associated with a heterodimer of CD79A and CD79B.

The protein localises to the secreted. It localises to the cell membrane. Functionally, immunoglobulins, also known as antibodies, are membrane-bound or secreted glycoproteins produced by B lymphocytes. In the recognition phase of humoral immunity, the membrane-bound immunoglobulins serve as receptors which, upon binding of a specific antigen, trigger the clonal expansion and differentiation of B lymphocytes into immunoglobulins-secreting plasma cells. Secreted immunoglobulins mediate the effector phase of humoral immunity, which results in the elimination of bound antigens. The antigen binding site is formed by the variable domain of one heavy chain, together with that of its associated light chain. Thus, each immunoglobulin has two antigen binding sites with remarkable affinity for a particular antigen. The variable domains are assembled by a process called V-(D)-J rearrangement and can then be subjected to somatic hypermutations which, after exposure to antigen and selection, allow affinity maturation for a particular antigen. IgD is the major antigen receptor isotype on the surface of most peripheral B cells, where it is coexpressed with IgM. The membrane-bound IgD (mIgD) induces the phosphorylation of CD79A and CD79B by the Src family of protein tyrosine kinases. Soluble IgD (sIgD) concentration in serum is below those of IgG, IgA, and IgM but much higher than that of IgE. IgM and IgD molecules present on B cells have identical V regions and antigen-binding sites. After the antigen binds to the B cell receptor, the secreted form sIgD is shut off. IgD is a potent inducer of TNF, IL1B, and IL1RN. IgD also induces release of IL6, IL10, and LIF from peripheral blood mononuclear cells. Monocytes seem to be the main producers of cytokines in vitro in the presence of IgD. The chain is Immunoglobulin delta heavy chain from Homo sapiens (Human).